The sequence spans 530 residues: Phosphoenolpyruvate carboxykinase (ATP) (530 aa).

Arginine 58, tyrosine 195, and lysine 201 together coordinate substrate. ATP-binding positions include lysine 201, histidine 220, and glycine 236–threonine 244. Mn(2+) contacts are provided by lysine 201 and histidine 220. Aspartate 257 is a Mn(2+) binding site. ATP-binding positions include glutamate 285, arginine 321, arginine 440–isoleucine 441, and threonine 446. Arginine 321 is a substrate binding site.

Belongs to the phosphoenolpyruvate carboxykinase (ATP) family. It depends on Mn(2+) as a cofactor.

Its subcellular location is the cytoplasm. The enzyme catalyses oxaloacetate + ATP = phosphoenolpyruvate + ADP + CO2. The protein operates within carbohydrate biosynthesis; gluconeogenesis. Involved in the gluconeogenesis. Catalyzes the conversion of oxaloacetate (OAA) to phosphoenolpyruvate (PEP) through direct phosphoryl transfer between the nucleoside triphosphate and OAA. In Staphylococcus epidermidis (strain ATCC 35984 / DSM 28319 / BCRC 17069 / CCUG 31568 / BM 3577 / RP62A), this protein is Phosphoenolpyruvate carboxykinase (ATP).